Reading from the N-terminus, the 368-residue chain is Uroporphyrinogen decarboxylase (368 aa).

Residues Arg-41–Arg-45, Asp-91, Tyr-168, Ser-223, and His-345 each bind substrate.

This sequence belongs to the uroporphyrinogen decarboxylase family. As to quaternary structure, homodimer.

Its subcellular location is the cytoplasm. It catalyses the reaction uroporphyrinogen III + 4 H(+) = coproporphyrinogen III + 4 CO2. Its pathway is porphyrin-containing compound metabolism; protoporphyrin-IX biosynthesis; coproporphyrinogen-III from 5-aminolevulinate: step 4/4. Catalyzes the decarboxylation of four acetate groups of uroporphyrinogen-III to yield coproporphyrinogen-III. This is Uroporphyrinogen decarboxylase from Psychrobacter sp. (strain PRwf-1).